The chain runs to 742 residues: Vesicle-fusing ATPase (742 aa).

Residues 499–504 (NGMVDC) and 539–546 (SGSGKTAL) each bind ATP. Thr544 serves as a coordination point for Mg(2+).

The protein belongs to the AAA ATPase family. Homohexamer. Binds to SNARE-SNAP complexes to form 20S particles. The cofactor is Mg(2+).

It localises to the cytoplasm. The catalysed reaction is ATP + H2O = ADP + phosphate + H(+). Functionally, required for vesicle-mediated transport. Catalyzes the fusion of transport vesicles within the Golgi cisternae. Is also required for transport from the endoplasmic reticulum to the Golgi stack. Seems to function as a fusion protein required for the delivery of cargo proteins to all compartments of the Golgi stack independent of vesicle origin. Required for maintaining the normal morphology of the Golgi apparatus. The protein is Vesicle-fusing ATPase of Arabidopsis thaliana (Mouse-ear cress).